Consider the following 693-residue polypeptide: Tegument protein UL47 (693 aa).

Disordered stretches follow at residues 1-32 (MSAR…DGVG) and 48-126 (ELEA…GYLG). Over residues 48–57 (ELEALEEMAG) the composition is skewed to acidic residues. Residues 50–75 (EALEEMAGDEPPVRRRREGPRARRRR) are RNA-binding. The Nuclear localization signal signature appears at 63 to 75 (RRRREGPRARRRR). Basic residues predominate over residues 63-75 (RRRREGPRARRRR). Positions 647 to 670 (SVLGPRVRVVDIMSQFRKLLMGDE) match the Nuclear export signal motif.

This sequence belongs to the alphaherpesvirinae HHV-1 UL47 family. Interacts with US3 kinase. Interacts with UL31 and UL34; these interactions seem important for efficient virion nuclear egress. Interacts with UL41/VHS. Post-translationally, phosphorylated by US3. This phosphorylation is required for proper nuclear localization.

The protein resides in the virion tegument. The protein localises to the host nucleus. It localises to the host cytoplasm. Functionally, tegument protein that can bind to various RNA transcripts. Plays a role in the attenuation of selective viral and cellular mRNA degradation by modulating the activity of host shutoff RNase UL41/VHS. Also plays a role in the primary envelopment of virions in the perinuclear space, probably by interacting with two nuclear egress proteins UL31 and UL34. The protein is Tegument protein UL47 of Homo sapiens (Human).